The following is a 179-amino-acid chain: Ribulose bisphosphate carboxylase small subunit, chloroplastic 1/4 (179 aa).

The transit peptide at methionine 1 to glutamine 58 directs the protein to the chloroplast.

This sequence belongs to the RuBisCO small chain family. Heterohexadecamer of 8 large and 8 small subunits.

Its subcellular location is the plastid. It is found in the chloroplast. Its function is as follows. RuBisCO catalyzes two reactions: the carboxylation of D-ribulose 1,5-bisphosphate, the primary event in carbon dioxide fixation, as well as the oxidative fragmentation of the pentose substrate. Both reactions occur simultaneously and in competition at the same active site. Although the small subunit is not catalytic it is essential for maximal activity. This chain is Ribulose bisphosphate carboxylase small subunit, chloroplastic 1/4 (RBCS1), found in Fritillaria agrestis (Stinkbells).